An 86-amino-acid polypeptide reads, in one-letter code: Putative membrane protein insertion efficiency factor (86 aa).

A disordered region spans residues Gly-64–Ser-86. The span at Lys-70–Thr-79 shows a compositional bias: low complexity.

This sequence belongs to the UPF0161 family.

The protein resides in the cell inner membrane. Its function is as follows. Could be involved in insertion of integral membrane proteins into the membrane. The protein is Putative membrane protein insertion efficiency factor of Janthinobacterium sp. (strain Marseille) (Minibacterium massiliensis).